We begin with the raw amino-acid sequence, 250 residues long: MFLKSELLECNGSSVTLFQLSALQRIEHLEYLKQLEAVEVGDFQAAITFTVKSGAYLVAMSLWHGHPLKGSQGENAAAEVAKIQDEVMQTWPTELVAEAEYKVKLLSGMIAPVIDEPTSSGEERNEPAEPVTAGKALASELKFAMKLAREFGRPDWRAMLAGMSSTEYGDWKIFYQDNYFHDAQLDAHFSGLLYTISTLFFADPELTPDSFSILSPAPEAIDIDDPDDDTLMAKAAGISGGVRYGPDGSR.

Belongs to the lambda-like tail assembly protein family. In terms of assembly, interacts (via C-terminus) with tail tube protein. Interacts (via N-terminus) with the tail assembly protein G and the tape measure protein.

The protein localises to the host cytoplasm. Its function is as follows. Promotes tail assembly by creating a scaffold for the tail tube proteins. Tail assembly proteins G and GT probably wrap the linear tape measure protein to create a tail assembly scaffold. This allows the polymerization of the tail tube protein, during which G and GT are released, therefore they are absent in the mature virion. The tail assembly protein GT is produced by a rare -1 ribosomal frameshift. The ratio of translated G/GT is about 20, and this ratio is important for proper tail assembly. The protein is Tail assembly protein GT of Escherichia coli (Bacteriophage N15).